The following is a 136-amino-acid chain: MSVTYATLGELKVGSYIVIDGEPCRIVEMSKAKTGKHGSAKAHVVAVCLFSGNKKTLTAPVDARVEVPIIDKRIGQVIADMGDMVQIMDMETYETFEVEKPKDEDLKSKLQPGVEVEYWVVMGRYMITRVRGAPKS.

At Lys-36 the chain carries Hypusine.

It belongs to the eIF-5A family.

The protein localises to the cytoplasm. In terms of biological role, functions by promoting the formation of the first peptide bond. This is Translation initiation factor 5A (eIF5A) from Hyperthermus butylicus (strain DSM 5456 / JCM 9403 / PLM1-5).